A 396-amino-acid polypeptide reads, in one-letter code: S-adenosylmethionine synthase (396 aa).

His16 provides a ligand contact to ATP. Residue Asp18 participates in Mg(2+) binding. Residue Glu44 participates in K(+) binding. Residues Glu57 and Gln100 each contribute to the L-methionine site. Residues 100-110 form a flexible loop region; that stretch reads QSVDIAQGVDR. Residues 165–167, 231–232, Asp240, 246–247, Ala263, and Lys267 each bind ATP; these read DAK, KF, and RK. Residue Asp240 participates in L-methionine binding. Residue Lys271 participates in L-methionine binding.

Belongs to the AdoMet synthase family. As to quaternary structure, homotetramer; dimer of dimers. The cofactor is Mg(2+). Requires K(+) as cofactor.

The protein resides in the cytoplasm. It carries out the reaction L-methionine + ATP + H2O = S-adenosyl-L-methionine + phosphate + diphosphate. Its pathway is amino-acid biosynthesis; S-adenosyl-L-methionine biosynthesis; S-adenosyl-L-methionine from L-methionine: step 1/1. In terms of biological role, catalyzes the formation of S-adenosylmethionine (AdoMet) from methionine and ATP. The overall synthetic reaction is composed of two sequential steps, AdoMet formation and the subsequent tripolyphosphate hydrolysis which occurs prior to release of AdoMet from the enzyme. The sequence is that of S-adenosylmethionine synthase from Marinobacter nauticus (strain ATCC 700491 / DSM 11845 / VT8) (Marinobacter aquaeolei).